The following is a 518-amino-acid chain: Calcium and calcium/calmodulin-dependent serine/threonine-protein kinase (518 aa).

The region spanning 13–300 (YEISEILGRG…AQELLSHPWV (288 aa)) is the Protein kinase domain. ATP is bound by residues 19–27 (LGRGGFSVV) and Lys44. Catalysis depends on Asp165, which acts as the Proton acceptor. Phosphothreonine is present on Thr265. The segment at 323–336 (ARRKLRAAAIASVW) is calmodulin-binding. The stretch at 344–365 (TKKLRSLVGTYDLKEEEIESLR) forms a coiled coil. EF-hand domains lie at 394-429 (SLIPLAPRIFDLFDNNRDGTIDMREILCGFSSLKNS), 430-465 (KGDDALRLCFQMYDTDRSGCITKEEVASMLCALPEE), and 472-507 (TEPGKLDEIFDLMDANSDGKVTFEEFKAAMQRDSSL). Asp407, Asn409, Asp411, Thr413, Glu418, Asp443, Asp445, Ser447, Cys449, Glu454, Asp485, Asn487, Asp489, Lys491, and Glu496 together coordinate Ca(2+).

It belongs to the protein kinase superfamily. CAMK Ser/Thr protein kinase family. CaMK subfamily. In terms of assembly, interacts with IPD3. Interacts with CIP73. Autophosphorylation stimulated by calcium. Occurs probably by an intermolecular mechanism. As to expression, mainly expressed in roots and nodules. Detected in leaves, stems and cotyledons.

The protein resides in the nucleus. It catalyses the reaction L-seryl-[protein] + ATP = O-phospho-L-seryl-[protein] + ADP + H(+). The enzyme catalyses L-threonyl-[protein] + ATP = O-phospho-L-threonyl-[protein] + ADP + H(+). Its activity is regulated as follows. Activated by calcium/calmodulin binding after calcium-induced autophosphorylation. In terms of biological role, calcium- and calmodulin-dependent protein kinase necessary and sufficient for dedifferentiation of root cortical cells into nodule initials. Not required for calcium spiking. Acts as central regulator of the nodule organogenesis program. Required for root hair curling and infection thread (IT) formation upon rhizobial infection, and arbuscule formation during arbuscular mycorrhiza (AM) fungal infection. Phosphorylates the downstream target IPD3, a protein required for root infection by symbiotic rhizobia and AM fungi. Phosphorylates the downstream target CIP73, a protein required for root nodule organogenesis. Mediates the phosphorylation of leghemoglobins (e.g. LB1) to modulate their oxygen O(2) affinity, thus regulating the diffusion of oxygen to the bacteroids in nodules. This is Calcium and calcium/calmodulin-dependent serine/threonine-protein kinase from Lotus japonicus (Lotus corniculatus var. japonicus).